The sequence spans 390 residues: MAAQKDLWDAIVIGAGIQGCFTAYHLAKHRKRILLLEQFFLPHSRGSSHGQSRIIRKAYLEDFYTRMMHECYQIWAQLEHEAGTQLHRQTGLLLLGMKENQELKTIQANLSRQRVEHQCLSSEELKQRFPNIRLPRGEVGLLDNSGGVIYAYKALRALQDAIRQLGGIVRDGEKVVEINPGLLVTVKTTSRSYQAKSLVITAGPWTNQLLRPLGIEMPLQTLRINVCYWREMVPGSYGVSQAFPCFLWLGLCPHHIYGLPTGEYPGLMKVSYHHGNHADPEERDCPTARTDIGDVQILSSFVRDHLPDLKPEPAVIESCMYTNTPDEQFILDRHPKYDNIVIGAGFSGHGFKLAPVVGKILYELSMKLTPSYDLAPFRISRFPSLGKAHL.

FAD is bound at residue 9 to 39; the sequence is DAIVIGAGIQGCFTAYHLAKHRKRILLLEQF. Lys126 carries the N6-acetyllysine modification. Cys319 is subject to S-8alpha-FAD cysteine. Positions 388 to 390 match the Microbody targeting signal motif; it reads AHL.

The protein belongs to the MSOX/MTOX family. FAD is required as a cofactor. In terms of tissue distribution, expressed in the liver and kidney.

It is found in the peroxisome. The catalysed reaction is sarcosine + O2 + H2O = formaldehyde + glycine + H2O2. It carries out the reaction L-pipecolate + O2 = L-1-piperideine-6-carboxylate + H2O2 + H(+). Its function is as follows. Metabolizes sarcosine and L-pipecolic acid. The chain is Peroxisomal sarcosine oxidase (PIPOX) from Homo sapiens (Human).